Reading from the N-terminus, the 167-residue chain is Phosphopantetheine adenylyltransferase (167 aa).

Serine 10 contributes to the substrate binding site. ATP contacts are provided by residues serine 10 to phenylalanine 11 and histidine 18. 3 residues coordinate substrate: lysine 42, alanine 79, and arginine 93. ATP contacts are provided by residues glycine 94–arginine 96, glutamate 104, and valine 129–threonine 135.

It belongs to the bacterial CoaD family. As to quaternary structure, homohexamer. Mg(2+) serves as cofactor.

It localises to the cytoplasm. The catalysed reaction is (R)-4'-phosphopantetheine + ATP + H(+) = 3'-dephospho-CoA + diphosphate. It participates in cofactor biosynthesis; coenzyme A biosynthesis; CoA from (R)-pantothenate: step 4/5. Functionally, reversibly transfers an adenylyl group from ATP to 4'-phosphopantetheine, yielding dephospho-CoA (dPCoA) and pyrophosphate. The sequence is that of Phosphopantetheine adenylyltransferase from Methylocella silvestris (strain DSM 15510 / CIP 108128 / LMG 27833 / NCIMB 13906 / BL2).